The following is a 189-amino-acid chain: Ribosome maturation factor RimP (189 aa).

It belongs to the RimP family.

The protein resides in the cytoplasm. Functionally, required for maturation of 30S ribosomal subunits. The chain is Ribosome maturation factor RimP from Corynebacterium kroppenstedtii (strain DSM 44385 / JCM 11950 / CIP 105744 / CCUG 35717).